The following is a 315-amino-acid chain: Nucleotide-binding protein PsycPRwf_2129 (315 aa).

29-36 (GRSGSGKT) contacts ATP. Residue 79 to 82 (DIRT) coordinates GTP.

Belongs to the RapZ-like family.

Its function is as follows. Displays ATPase and GTPase activities. The protein is Nucleotide-binding protein PsycPRwf_2129 of Psychrobacter sp. (strain PRwf-1).